Here is a 372-residue protein sequence, read N- to C-terminus: Cyclin-dependent kinase 9 (372 aa).

One can recognise a Protein kinase domain in the interval 19–315; that stretch reads YEKLAKIGQG…SDDALNHDFF (297 aa). ATP is bound at residue 25–33; that stretch reads IGQGTFGEV. An N6-acetyllysine; by EP300/CBP, PCAF/KAT2B and GCN5/KAT2A modification is found at Lys-44. ATP is bound by residues Lys-48 and 104–106; that span reads DFC. N6-acetyllysine; by PCAF/KAT2B and GCN5/KAT2A is present on Lys-48. The active-site Proton acceptor is the Asp-149. The T-loop stretch occupies residues 166–191; that stretch reads ADFGLARAFSLAKNSQPNRYTNRVVT. Residue Asp-167 participates in ATP binding. Ser-175 carries the phosphoserine modification. Residue Thr-186 is modified to Phosphothreonine; by CaMK1D. The disordered stretch occupies residues 343 to 372; it reads RRKGSQITQQSTNQSRNPATTNQTEFERVF. Ser-347 is modified (phosphoserine; by CDK9 and PKA). Residues 347 to 366 are compositionally biased toward polar residues; it reads SQITQQSTNQSRNPATTNQT. Thr-350 carries the phosphothreonine; by CDK9 modification. Position 353 is a phosphoserine; by CDK9 (Ser-353). The residue at position 354 (Thr-354) is a Phosphothreonine; by CDK9. The residue at position 357 (Ser-357) is a Phosphoserine; by CDK9. Thr-362 and Thr-363 each carry phosphothreonine; by CDK9.

The protein belongs to the protein kinase superfamily. CMGC Ser/Thr protein kinase family. CDC2/CDKX subfamily. In terms of assembly, component of the super elongation complex (SEC), at least composed of EAF1, EAF2, CDK9, MLLT3/AF9, AFF (AFF1 or AFF4), the P-TEFb complex and ELL (ELL, ELL2 or ELL3). Associates with CCNT1/cyclin-T1, CCNT2/cyclin-T2 (isoform A and isoform B) or CCNK/cyclin-K to form active P-TEFb. P-TEFb forms a complex with AFF4/AF5Q31 and is part of the super elongation complex (SEC). Component of a complex which is composed of at least 5 members: HTATSF1/Tat-SF1, P-TEFb complex, RNA pol II, SUPT5H, and NCL/nucleolin. Associates with UBR5 and forms a transcription regulatory complex composed of CDK9, RNAP II, UBR5 and TFIIS/TCEA1 that can stimulate target gene transcription (e.g. gamma fibrinogen/FGG) by recruiting their promoters. Component of the 7SK snRNP inactive complex which is composed of at least 8 members: P-TEFb (composed of CDK9 and CCNT1/cyclin-T1), HEXIM1, HEXIM2, LARP7, BCDIN3, SART3 proteins and 7SK and U6 snRNAs. This inactive 7SK snRNP complex can also interact with NCOR1 and HDAC3, probably to regulate CDK9 acetylation. Release of P-TEFb from P-TEFb/7SK snRNP complex requires both PP2B to transduce calcium Ca(2+) signaling in response to stimuli (e.g. UV or hexamethylene bisacetamide (HMBA)), and PPP1CA to dephosphorylate Thr-186. This released P-TEFb remains inactive in the pre-initiation complex with BRD4 until new Thr-186 phosphorylation occurs after the synthesis of a short RNA. Interacts with BRD4; to target chromatin binding. Interacts with JMJD6. Interacts with activated nuclear STAT3 and RELA/p65. Binds to AR and MYOD1. Forms a complex composed of CDK9, CCNT1/cyclin-T1, EP300 and GATA4 that stimulates hypertrophy in cardiomyocytes. The large PER complex involved in the repression of transcriptional termination is composed of at least PER2, CDK9, DDX5, DHX9, NCBP1 and POLR2A. Interacts with HSF1. Interacts with TBX21. Interacts with WDR43. Interacts with ZMYND8; the association appears to occur between homodimeric ZMYND8 and the activated form of the P-TEFb complex. Autophosphorylation at Thr-186, Ser-347, Thr-350, Ser-353, Thr-354 and Ser-357 triggers kinase activity by promoting cyclin and substrate binding upon conformational changes. Thr-186 phosphorylation requires the calcium Ca(2+) signaling pathway, including CaMK1D and calmodulin. This inhibition is relieved by Thr-29 dephosphorylation. Phosphorylation at Ser-175 inhibits kinase activity. Can be phosphorylated on either Thr-362 or Thr-363 but not on both simultaneously. Post-translationally, dephosphorylation of Thr-186 by PPM1A and PPM1B blocks CDK9 activity and may lead to CDK9 proteasomal degradation. However, PPP1CA-mediated Thr-186 dephosphorylation is required to release P-TEFb from its inactive P-TEFb/7SK snRNP complex. Dephosphorylated at Ser-347 by the PNUTS-PP1 complex during RNA polymerase II transcription pause-release. Dephosphorylation of C-terminus Thr and Ser residues by protein phosphatase-1 (PP1) triggers CDK9 activity. In terms of processing, N6-acetylation of Lys-44 promotes kinase activity, whereas acetylation of both Lys-44 and Lys-48 mediated by PCAF/KAT2B and GCN5/KAT2A reduces kinase activity. The acetylated form associates with PML bodies in the nuclear matrix and with the transcriptionally silent HIV-1 genome; deacetylated upon transcription stimulation. Deacetylated by SIRT7, promoting the kinase activity and subsequent 'Ser-2' phosphorylation of the C-terminal domain (CTD) of RNA polymerase II. Polyubiquitinated and thus activated by UBR5. This ubiquitination is promoted by TFIIS/TCEA1 and favors 'Ser-2' phosphorylation of RPB1/POLR2A CTD.

The protein resides in the nucleus. It localises to the cytoplasm. The protein localises to the PML body. The enzyme catalyses L-seryl-[protein] + ATP = O-phospho-L-seryl-[protein] + ADP + H(+). It carries out the reaction L-threonyl-[protein] + ATP = O-phospho-L-threonyl-[protein] + ADP + H(+). It catalyses the reaction [DNA-directed RNA polymerase] + ATP = phospho-[DNA-directed RNA polymerase] + ADP + H(+). With respect to regulation, activation by Thr-186 phosphorylation is calcium Ca(2+) signaling pathway-dependent; actively inactivated by dephosphorylation mediated by PPP1CA, PPM1A and PPM1B. Reversibly repressed by acetylation at Lys-44 and Lys-48. In terms of biological role, protein kinase involved in the regulation of transcription. Member of the cyclin-dependent kinase pair (CDK9/cyclin-T) complex, also called positive transcription elongation factor b (P-TEFb), which facilitates the transition from abortive to productive elongation by phosphorylating the CTD (C-terminal domain) of the large subunit of RNA polymerase II (RNAP II) POLR2A, SUPT5H and RDBP. This complex is inactive when in the 7SK snRNP complex form. Phosphorylates EP300, MYOD1, RPB1/POLR2A and AR and the negative elongation factors DSIF and NELFE. Regulates cytokine inducible transcription networks by facilitating promoter recognition of target transcription factors (e.g. TNF-inducible RELA/p65 activation and IL-6-inducible STAT3 signaling). Promotes RNA synthesis in genetic programs for cell growth, differentiation and viral pathogenesis. P-TEFb is also involved in cotranscriptional histone modification, mRNA processing and mRNA export. Modulates a complex network of chromatin modifications including histone H2B monoubiquitination (H2Bub1), H3 lysine 4 trimethylation (H3K4me3) and H3K36me3; integrates phosphorylation during transcription with chromatin modifications to control co-transcriptional histone mRNA processing. The CDK9/cyclin-K complex has also a kinase activity towards CTD of RNAP II and can substitute for CDK9/cyclin-T P-TEFb in vitro. Replication stress response protein; the CDK9/cyclin-K complex is required for genome integrity maintenance, by promoting cell cycle recovery from replication arrest and limiting single-stranded DNA amount in response to replication stress, thus reducing the breakdown of stalled replication forks and avoiding DNA damage. In addition, probable function in DNA repair of isoform 2 via interaction with KU70/XRCC6. Promotes cardiac myocyte enlargement. RPB1/POLR2A phosphorylation on 'Ser-2' in CTD activates transcription. AR phosphorylation modulates AR transcription factor promoter selectivity and cell growth. DSIF and NELF phosphorylation promotes transcription by inhibiting their negative effect. The phosphorylation of MYOD1 enhances its transcriptional activity and thus promotes muscle differentiation. Catalyzes phosphorylation of KAT5, promoting KAT5 recruitment to chromatin and histone acetyltransferase activity. This chain is Cyclin-dependent kinase 9 (CDK9), found in Bos taurus (Bovine).